Consider the following 437-residue polypeptide: Glycogen synthase (437 aa).

Lys-15 lines the ADP-alpha-D-glucose pocket.

The protein belongs to the glycosyltransferase 1 family. Bacterial/plant glycogen synthase subfamily.

It carries out the reaction [(1-&gt;4)-alpha-D-glucosyl](n) + ADP-alpha-D-glucose = [(1-&gt;4)-alpha-D-glucosyl](n+1) + ADP + H(+). The protein operates within glycan biosynthesis; glycogen biosynthesis. In terms of biological role, synthesizes alpha-1,4-glucan chains using ADP-glucose. The sequence is that of Glycogen synthase from Thermus thermophilus (strain ATCC 27634 / DSM 579 / HB8).